The sequence spans 255 residues: Ribonuclease PH (255 aa).

Phosphate is bound by residues Arg-86 and 124-126; that span reads GTR.

The protein belongs to the RNase PH family. In terms of assembly, homohexameric ring arranged as a trimer of dimers.

It catalyses the reaction tRNA(n+1) + phosphate = tRNA(n) + a ribonucleoside 5'-diphosphate. In terms of biological role, phosphorolytic 3'-5' exoribonuclease that plays an important role in tRNA 3'-end maturation. Removes nucleotide residues following the 3'-CCA terminus of tRNAs; can also add nucleotides to the ends of RNA molecules by using nucleoside diphosphates as substrates, but this may not be physiologically important. Probably plays a role in initiation of 16S rRNA degradation (leading to ribosome degradation) during starvation. The polypeptide is Ribonuclease PH (Geobacillus thermodenitrificans (strain NG80-2)).